We begin with the raw amino-acid sequence, 271 residues long: NAD kinase (271 aa).

Aspartate 64 functions as the Proton acceptor in the catalytic mechanism. NAD(+) is bound by residues 64 to 65 (DG), arginine 69, 132 to 133 (NE), lysine 143, arginine 160, aspartate 162, 173 to 178 (TAYAMS), alanine 197, and glutamine 231.

It belongs to the NAD kinase family. A divalent metal cation is required as a cofactor.

Its subcellular location is the cytoplasm. It catalyses the reaction NAD(+) + ATP = ADP + NADP(+) + H(+). In terms of biological role, involved in the regulation of the intracellular balance of NAD and NADP, and is a key enzyme in the biosynthesis of NADP. Catalyzes specifically the phosphorylation on 2'-hydroxyl of the adenosine moiety of NAD to yield NADP. This Methanocorpusculum labreanum (strain ATCC 43576 / DSM 4855 / Z) protein is NAD kinase.